Consider the following 133-residue polypeptide: Oocytes ribonuclease (133 aa).

A signal peptide spans 1–22; that stretch reads MCAKSLLLVFGILLGLSHLSLS. Glutamine 23 carries the post-translational modification Pyrrolidone carboxylic acid. The Proton acceptor role is filled by histidine 32. 4 disulfides stabilise this stretch: cysteine 41/cysteine 93, cysteine 56/cysteine 103, cysteine 74/cysteine 118, and cysteine 115/cysteine 132. 57-61 is a substrate binding site; that stretch reads KRVNT. The active-site Proton donor is histidine 125.

This sequence belongs to the pancreatic ribonuclease family. As to quaternary structure, monomer.

The protein localises to the secreted. Preferentially cleaves single-stranded RNA at pyrimidine residues with a 3'flanking guanine. Hydrolyzes poly(U) and poly(C) as substrates, and prefers the former. The S-lectins in frog eggs may be involved in the fertilization and development of the frog embryo. This lectin agglutinates various animal cells, including normal lymphocytes, erythrocytes, and fibroblasts of animal and human origin. It is cytotoxic against several tumor cells. The chain is Oocytes ribonuclease (RCR) from Aquarana catesbeiana (American bullfrog).